A 161-amino-acid chain; its full sequence is Endoribonuclease YbeY (161 aa).

Zn(2+) contacts are provided by His121, His125, and His131.

Belongs to the endoribonuclease YbeY family. Zn(2+) is required as a cofactor.

The protein localises to the cytoplasm. Functionally, single strand-specific metallo-endoribonuclease involved in late-stage 70S ribosome quality control and in maturation of the 3' terminus of the 16S rRNA. The sequence is that of Endoribonuclease YbeY from Xanthomonas oryzae pv. oryzae (strain MAFF 311018).